A 273-amino-acid chain; its full sequence is Dermonecrotic toxin LhSicTox-alphaIA2biv (273 aa).

Residue His-5 is part of the active site. Residues Glu-25 and Asp-27 each contribute to the Mg(2+) site. The active-site Nucleophile is the His-41. Disulfide bonds link Cys-45–Cys-51 and Cys-47–Cys-190. Asp-85 provides a ligand contact to Mg(2+).

It belongs to the arthropod phospholipase D family. Class II subfamily. Mg(2+) serves as cofactor. Expressed by the venom gland.

It localises to the secreted. It carries out the reaction an N-(acyl)-sphingosylphosphocholine = an N-(acyl)-sphingosyl-1,3-cyclic phosphate + choline. It catalyses the reaction an N-(acyl)-sphingosylphosphoethanolamine = an N-(acyl)-sphingosyl-1,3-cyclic phosphate + ethanolamine. The catalysed reaction is a 1-acyl-sn-glycero-3-phosphocholine = a 1-acyl-sn-glycero-2,3-cyclic phosphate + choline. The enzyme catalyses a 1-acyl-sn-glycero-3-phosphoethanolamine = a 1-acyl-sn-glycero-2,3-cyclic phosphate + ethanolamine. In terms of biological role, dermonecrotic toxins cleave the phosphodiester linkage between the phosphate and headgroup of certain phospholipids (sphingolipid and lysolipid substrates), forming an alcohol (often choline) and a cyclic phosphate. This toxin acts on sphingomyelin (SM). It may also act on ceramide phosphoethanolamine (CPE), lysophosphatidylcholine (LPC) and lysophosphatidylethanolamine (LPE), but not on lysophosphatidylserine (LPS), and lysophosphatidylglycerol (LPG). It acts by transphosphatidylation, releasing exclusively cyclic phosphate products as second products. Induces dermonecrosis, hemolysis, increased vascular permeability, edema, inflammatory response, and platelet aggregation. The sequence is that of Dermonecrotic toxin LhSicTox-alphaIA2biv from Loxosceles hirsuta (Recluse spider).